We begin with the raw amino-acid sequence, 306 residues long: UDP-3-O-acyl-N-acetylglucosamine deacetylase (306 aa).

Positions 79, 238, and 242 each coordinate Zn(2+). H265 acts as the Proton donor in catalysis.

It belongs to the LpxC family. It depends on Zn(2+) as a cofactor.

It catalyses the reaction a UDP-3-O-[(3R)-3-hydroxyacyl]-N-acetyl-alpha-D-glucosamine + H2O = a UDP-3-O-[(3R)-3-hydroxyacyl]-alpha-D-glucosamine + acetate. It participates in glycolipid biosynthesis; lipid IV(A) biosynthesis; lipid IV(A) from (3R)-3-hydroxytetradecanoyl-[acyl-carrier-protein] and UDP-N-acetyl-alpha-D-glucosamine: step 2/6. In terms of biological role, catalyzes the hydrolysis of UDP-3-O-myristoyl-N-acetylglucosamine to form UDP-3-O-myristoylglucosamine and acetate, the committed step in lipid A biosynthesis. This chain is UDP-3-O-acyl-N-acetylglucosamine deacetylase, found in Shewanella loihica (strain ATCC BAA-1088 / PV-4).